Reading from the N-terminus, the 259-residue chain is Ribonuclease PH (259 aa).

Residues arginine 88 and 126 to 128 (GTR) each bind phosphate.

This sequence belongs to the RNase PH family. In terms of assembly, homohexameric ring arranged as a trimer of dimers.

It catalyses the reaction tRNA(n+1) + phosphate = tRNA(n) + a ribonucleoside 5'-diphosphate. Functionally, phosphorolytic 3'-5' exoribonuclease that plays an important role in tRNA 3'-end maturation. Removes nucleotide residues following the 3'-CCA terminus of tRNAs; can also add nucleotides to the ends of RNA molecules by using nucleoside diphosphates as substrates, but this may not be physiologically important. Probably plays a role in initiation of 16S rRNA degradation (leading to ribosome degradation) during starvation. This is Ribonuclease PH from Mycolicibacterium paratuberculosis (strain ATCC BAA-968 / K-10) (Mycobacterium paratuberculosis).